Consider the following 470-residue polypeptide: Ribulose bisphosphate carboxylase large chain (470 aa).

Substrate is bound by residues asparagine 115 and threonine 165. The active-site Proton acceptor is lysine 167. Lysine 169 lines the substrate pocket. Mg(2+) is bound by residues lysine 193, aspartate 195, and glutamate 196. N6-carboxylysine is present on lysine 193. Histidine 286 acts as the Proton acceptor in catalysis. 3 residues coordinate substrate: arginine 287, histidine 319, and serine 371.

It belongs to the RuBisCO large chain family. Type I subfamily. Heterohexadecamer of 8 large chains and 8 small chains. Mg(2+) serves as cofactor.

Its subcellular location is the carboxysome. It catalyses the reaction 2 (2R)-3-phosphoglycerate + 2 H(+) = D-ribulose 1,5-bisphosphate + CO2 + H2O. The catalysed reaction is D-ribulose 1,5-bisphosphate + O2 = 2-phosphoglycolate + (2R)-3-phosphoglycerate + 2 H(+). RuBisCO catalyzes two reactions: the carboxylation of D-ribulose 1,5-bisphosphate, the primary event in carbon dioxide fixation, as well as the oxidative fragmentation of the pentose substrate in the photorespiration process. Both reactions occur simultaneously and in competition at the same active site. The protein is Ribulose bisphosphate carboxylase large chain of Synechococcus sp. (strain CC9902).